The following is a 545-amino-acid chain: Chaperonin GroEL (545 aa).

ATP-binding positions include 30–33 (TLGP), Lys51, 87–91 (DGTTT), Gly415, 479–481 (NAA), and Asp495.

This sequence belongs to the chaperonin (HSP60) family. As to quaternary structure, forms a cylinder of 14 subunits composed of two heptameric rings stacked back-to-back. Interacts with the co-chaperonin GroES.

It is found in the cytoplasm. It catalyses the reaction ATP + H2O + a folded polypeptide = ADP + phosphate + an unfolded polypeptide.. Its function is as follows. Together with its co-chaperonin GroES, plays an essential role in assisting protein folding. The GroEL-GroES system forms a nano-cage that allows encapsulation of the non-native substrate proteins and provides a physical environment optimized to promote and accelerate protein folding. This chain is Chaperonin GroEL, found in Cellvibrio japonicus (strain Ueda107) (Pseudomonas fluorescens subsp. cellulosa).